We begin with the raw amino-acid sequence, 486 residues long: MTQFIEGKWTAGLGHEVTSINPANQEVIWNSKTATPEQVNTAVDAARNAQFDWFMLGFEARLAIVEAYRDQLEANKAEMAEVIAQETGKPQWETATEAGAMIGKIGLSVAAFHKRTGTSENDTPAGRAVLRHKPHGVVAVFGPYNFPGHLPNGHIVPALLAGNTVVFKPSELTPKVAELMLKLWEKAGLPAGVINLVQGEVETGKALASHPQIDGLFFTGSSRTGHILHQQYAGDPGKILALEMGGNNPLIIKGVEDTKAAVHDIIQSAYISSGQRCTCARRLYVEKGAAGDALLEQLAVAVNNIQVGAWNAQPQPFMGSMISETAAKGMVEAQRNLVNLGATPMVELTHLEAGTGLVSPGLIDVTDVIELPDEEYFGPLLQVVRYSDFDEAIKLANATRYGLSAGILADSREDYDYFLARIRAGIVNWNKQITGASGAAPFGGVGASGNHRASAFYAADYCAYPVASVEADAVSLPAKLSPGLSI.

220–225 lines the NAD(+) pocket; sequence GSSRTG. Active-site residues include Glu243 and Cys277.

This sequence belongs to the aldehyde dehydrogenase family. AstD subfamily.

The catalysed reaction is N-succinyl-L-glutamate 5-semialdehyde + NAD(+) + H2O = N-succinyl-L-glutamate + NADH + 2 H(+). The protein operates within amino-acid degradation; L-arginine degradation via AST pathway; L-glutamate and succinate from L-arginine: step 4/5. In terms of biological role, catalyzes the NAD-dependent reduction of succinylglutamate semialdehyde into succinylglutamate. This is N-succinylglutamate 5-semialdehyde dehydrogenase from Shewanella piezotolerans (strain WP3 / JCM 13877).